Here is a 140-residue protein sequence, read N- to C-terminus: Large ribosomal subunit protein uL3 (140 aa).

It belongs to the universal ribosomal protein uL3 family. In terms of assembly, part of the 50S ribosomal subunit. Forms a cluster with proteins L14 and L19.

In terms of biological role, one of the primary rRNA binding proteins, it binds directly near the 3'-end of the 23S rRNA, where it nucleates assembly of the 50S subunit. The protein is Large ribosomal subunit protein uL3 (rplC) of Planobispora rosea.